Here is a 97-residue protein sequence, read N- to C-terminus: Aspartyl/glutamyl-tRNA(Asn/Gln) amidotransferase subunit C (97 aa).

Belongs to the GatC family. In terms of assembly, heterotrimer of A, B and C subunits.

The enzyme catalyses L-glutamyl-tRNA(Gln) + L-glutamine + ATP + H2O = L-glutaminyl-tRNA(Gln) + L-glutamate + ADP + phosphate + H(+). The catalysed reaction is L-aspartyl-tRNA(Asn) + L-glutamine + ATP + H2O = L-asparaginyl-tRNA(Asn) + L-glutamate + ADP + phosphate + 2 H(+). Allows the formation of correctly charged Asn-tRNA(Asn) or Gln-tRNA(Gln) through the transamidation of misacylated Asp-tRNA(Asn) or Glu-tRNA(Gln) in organisms which lack either or both of asparaginyl-tRNA or glutaminyl-tRNA synthetases. The reaction takes place in the presence of glutamine and ATP through an activated phospho-Asp-tRNA(Asn) or phospho-Glu-tRNA(Gln). The protein is Aspartyl/glutamyl-tRNA(Asn/Gln) amidotransferase subunit C of Prochlorococcus marinus (strain AS9601).